Here is a 244-residue protein sequence, read N- to C-terminus: Neurogenin-1 (244 aa).

Disordered stretches follow at residues 1-27 and 39-82; these read MPAPLETCISDLDCSSSNSSSDLSSFL and LAST…ARVR. Low complexity predominate over residues 10-27; the sequence is SDLDCSSSNSSSDLSSFL. The bHLH domain occupies 93-145; that stretch reads SRRVKANDRERNRMHNLNAALDALRSVLPSFPDDTKLTKIETLRFAYNYIWAL.

Efficient DNA binding requires dimerization with another bHLH protein. Expression restricted to the embryonic nervous system.

The protein resides in the nucleus. Acts as a transcriptional regulator. Involved in the initiation of neuronal differentiation. Activates transcription by binding to the E box (5'-CANNTG-3'). Associates with chromatin to enhancer regulatory elements in genes encoding key transcriptional regulators of neurogenesis. The sequence is that of Neurogenin-1 (Neurog1) from Mus musculus (Mouse).